A 175-amino-acid polypeptide reads, in one-letter code: MYQPHFWQRSIGWLCGGLLILLLGWTIAPATALAAAGVDNYVIQYLKVTDTVELPVNDRGETKTFTAVDLTRGKRLFEENCKNCHVGGSTLPNPLVSLSLKDLKGATPPRDTIASLVAFQRSPKSYDGSEESYSCRRVSEDWLTTEQLETLAAFILRAAAVAPGWGVESFPDSAP.

The first 34 residues, 1-34 (MYQPHFWQRSIGWLCGGLLILLLGWTIAPATALA), serve as a signal peptide directing secretion. Residues cysteine 81, cysteine 84, histidine 85, and cysteine 135 each contribute to the heme c site.

The protein belongs to the cytochrome c family. PsbV subfamily. It depends on heme c as a cofactor.

The protein resides in the cellular thylakoid membrane. In terms of biological role, probable low-potential cytochrome c, can partially replace cytochrome c-550 (PsbV) function. The protein is Cytochrome c-550-like protein of Thermosynechococcus vestitus (strain NIES-2133 / IAM M-273 / BP-1).